An 832-amino-acid polypeptide reads, in one-letter code: Subtilisin-like protease SBT2.1 (832 aa).

The signal sequence occupies residues 1–24; sequence MDESSLVRFVFLLCLVSSSVFCLA. Positions 25–138 are cleaved as a propeptide — activation peptide; it reads ESDQNATVSS…VVLDFLVEKA (114 aa). 2 N-linked (GlcNAc...) asparagine glycosylation sites follow: asparagine 29 and asparagine 73. Residues 36 to 136 enclose the Inhibitor I9 domain; it reads VYIVTLKDRP…ENVVLDFLVE (101 aa). The 540-residue stretch at 145 to 684 folds into the Peptidase S8 domain; sequence FLGLPRGAWL…SGFVNATAAL (540 aa). Aspartate 172 acts as the Charge relay system in catalysis. Asparagine 233 is a glycosylation site (N-linked (GlcNAc...) asparagine). Histidine 247 (charge relay system) is an active-site residue. Asparagine 272, asparagine 315, asparagine 390, asparagine 417, asparagine 470, asparagine 515, and asparagine 522 each carry an N-linked (GlcNAc...) asparagine glycan. The PA domain maps to 408 to 503; the sequence is LVLATHALRN…MDIPGILISS (96 aa). Serine 609 serves as the catalytic Charge relay system. 6 N-linked (GlcNAc...) asparagine glycosylation sites follow: asparagine 679, asparagine 705, asparagine 713, asparagine 723, asparagine 760, and asparagine 801.

It belongs to the peptidase S8 family.

The protein resides in the secreted. The sequence is that of Subtilisin-like protease SBT2.1 from Arabidopsis thaliana (Mouse-ear cress).